We begin with the raw amino-acid sequence, 270 residues long: Probable feruloyl esterase C (270 aa).

A signal peptide spans 1–22 (MAILSRLLTTVTLGSLLTSAVA).

This sequence belongs to the faeC family.

Its subcellular location is the secreted. The catalysed reaction is feruloyl-polysaccharide + H2O = ferulate + polysaccharide.. In terms of biological role, involved in degradation of plant cell walls. Hydrolyzes the feruloyl-arabinose ester bond in arabinoxylans, and the feruloyl-galactose ester bond in pectin. Active against paranitrophenyl-acetate, methyl ferulate and wheat arabinoxylan. The sequence is that of Probable feruloyl esterase C (faeC) from Aspergillus terreus (strain NIH 2624 / FGSC A1156).